The sequence spans 278 residues: Glutamate racemase (278 aa).

Substrate-binding positions include 13-14 and 45-46; these read DS and YG. Catalysis depends on cysteine 76, which acts as the Proton donor/acceptor. 77–78 contributes to the substrate binding site; it reads NT. Residue cysteine 185 is the Proton donor/acceptor of the active site. 186 to 187 contributes to the substrate binding site; that stretch reads TH.

This sequence belongs to the aspartate/glutamate racemases family.

It carries out the reaction L-glutamate = D-glutamate. It participates in cell wall biogenesis; peptidoglycan biosynthesis. Functionally, provides the (R)-glutamate required for cell wall biosynthesis. In Gloeothece citriformis (strain PCC 7424) (Cyanothece sp. (strain PCC 7424)), this protein is Glutamate racemase.